The primary structure comprises 366 residues: Anhydro-N-acetylmuramic acid kinase (366 aa).

10–17 (GTSMDGID) lines the ATP pocket.

This sequence belongs to the anhydro-N-acetylmuramic acid kinase family.

It catalyses the reaction 1,6-anhydro-N-acetyl-beta-muramate + ATP + H2O = N-acetyl-D-muramate 6-phosphate + ADP + H(+). The protein operates within amino-sugar metabolism; 1,6-anhydro-N-acetylmuramate degradation. Its pathway is cell wall biogenesis; peptidoglycan recycling. Its function is as follows. Catalyzes the specific phosphorylation of 1,6-anhydro-N-acetylmuramic acid (anhMurNAc) with the simultaneous cleavage of the 1,6-anhydro ring, generating MurNAc-6-P. Is required for the utilization of anhMurNAc either imported from the medium or derived from its own cell wall murein, and thus plays a role in cell wall recycling. This chain is Anhydro-N-acetylmuramic acid kinase, found in Legionella pneumophila (strain Corby).